The sequence spans 505 residues: Deoxyguanosinetriphosphate triphosphohydrolase (505 aa).

The HD domain occupies 66–273 (RLTHSMEVQQ…MEAADDISYC (208 aa)).

It belongs to the dGTPase family. Type 1 subfamily. As to quaternary structure, homotetramer. It depends on Mg(2+) as a cofactor.

It catalyses the reaction dGTP + H2O = 2'-deoxyguanosine + triphosphate + H(+). In terms of biological role, dGTPase preferentially hydrolyzes dGTP over the other canonical NTPs. The chain is Deoxyguanosinetriphosphate triphosphohydrolase from Escherichia coli O157:H7.